The sequence spans 3110 residues: Huntingtin (3110 aa).

A disordered region spans residues 1–58; it reads MKAFESLKSFQQQQQQQQPPPQPPPPPPPPPQPPQPPPQGQPPPPPPLPGPAEEPLHR. Lys-2 is modified (N6-acetyllysine). The segment covering 18–52 has biased composition (pro residues); it reads QPPPQPPPPPPPPPQPPQPPPQGQPPPPPPLPGPA. 2 positions are modified to N6-acetyllysine: Lys-146 and Lys-204. 2 HEAT repeats span residues 174–211 and 216–253; these read PYLVNLLPCLTRTSKRPEESVQETLAAAVPKIMASFGN and NEIKVLLKAFIANLKSSSPTVRRTAAGSAVSICQHSRR. N6-acetyllysine is present on Lys-313. Residues Ser-387, Ser-389, and Ser-402 each carry the phosphoserine modification. Position 412 is an N6-acetyllysine (Lys-412). Residues 462–473 are interaction with ZDHHC17; sequence GHDIITEQPRSQ. Residues 487–549 form a disordered region; that stretch reads DLTSAATDGD…PDSAVTPSDS (63 aa). Polar residues predominate over residues 521-549; sequence DGTQASSPISDSSQTTTEGPDSAVTPSDS. Residue Gly-522 is the site of N-myristoyl glycine attachment. A phosphoserine mark is found at Ser-611 and Ser-614. 2 HEAT repeats span residues 773-810 and 873-911; these read FSLVDCIPLLQKTLKDESSVTCKLACTAVRHCVLSLCS and KLQERVLNNVVIYLLGDEDPRVRHVAATTLTRLVPKLFY. The tract at residues 1137–1195 is disordered; the sequence is KAALPSLTNPPSLSPIRRKGKEKEPGEQTSTPMSPKKGGEASTASRQSDTSGPVTASKS. Residues 1140–1151 show a composition bias toward low complexity; it reads LPSLTNPPSLSP. Ser-1150 and Ser-1170 each carry phosphoserine; by CDK5. Over residues 1178–1195 the composition is skewed to polar residues; that stretch reads STASRQSDTSGPVTASKS. One copy of the HEAT 5 repeat lies at 1395 to 1432; the sequence is LFEPLVIKALKQYTTTTSVQLQKQVLDLLAQLVQLRVN. A Phosphoserine modification is found at Ser-1845. A Nuclear export signal motif is present at residues 2363–2372; the sequence is IVVSLARLPL. A disordered region spans residues 2601–2628; the sequence is EEEWDEEEEEEADAPAPTSPPVSPVNSR. Over residues 2602 to 2613 the composition is skewed to acidic residues; sequence EEWDEEEEEEAD.

Belongs to the huntingtin family. Interacts with PFN1. Interacts through its N-terminus with PRPF40A. Interacts with PQBP1. Interacts with SETD2. Interacts with SH3GLB1. Interacts with SYVN. Interacts with TPR; the interaction is inhibited by forms of Huntingtin with expanded polyglutamine stretch. Interacts with ZDHHC13 (via ANK repeats). Interacts with ZDHHC17 (via ANK repeats). Interacts with F8A1/F8A2/F8A3. Found in a complex with F8A1/F8A2/F8A3, HTT and RAB5A; mediates the recruitment of HTT by RAB5A. In terms of processing, phosphorylation at Ser-1150 and Ser-1170 by CDK5 in response to DNA damage in nuclei of neurons protects neurons against polyglutamine expansion as well as DNA damage mediated toxicity. Post-translationally, cleaved by caspases downstream of the polyglutamine stretch. Myristoylated at Gly-522, following proteolytic cleavage at Asp-521. In terms of tissue distribution, expressed to a high degree in all the regions of the brain of adults and in meiotic cells of the testis. In addition, very low levels are detected in various non-neuronal tissues (heart, muscle, liver, lung and kidney).

Its subcellular location is the cytoplasm. The protein localises to the nucleus. It localises to the cytoplasmic vesicle. It is found in the autophagosome. Its function is as follows. May play a role in microtubule-mediated transport or vesicle function. In terms of biological role, promotes the formation of autophagic vesicles. The chain is Huntingtin (Htt) from Rattus norvegicus (Rat).